The sequence spans 508 residues: Photosystem II CP47 reaction center protein (508 aa).

Helical transmembrane passes span 21–36, 101–115, 140–156, 203–218, 237–252, and 457–472; these read AVHIMHTALVAGWAGS, IVFSGLCFLAAIWHW, GIHLFLAGLACFGFGAF, IAAGTLGILAGLFHLS, VLSSSIAAVFFAAFVV, and SFALLFFFGHIWHGSR.

Belongs to the PsbB/PsbC family. PsbB subfamily. As to quaternary structure, PSII is composed of 1 copy each of membrane proteins PsbA, PsbB, PsbC, PsbD, PsbE, PsbF, PsbH, PsbI, PsbJ, PsbK, PsbL, PsbM, PsbT, PsbX, PsbY, PsbZ, Psb30/Ycf12, at least 3 peripheral proteins of the oxygen-evolving complex and a large number of cofactors. It forms dimeric complexes. Binds multiple chlorophylls. PSII binds additional chlorophylls, carotenoids and specific lipids. is required as a cofactor.

Its subcellular location is the plastid. The protein resides in the chloroplast thylakoid membrane. Functionally, one of the components of the core complex of photosystem II (PSII). It binds chlorophyll and helps catalyze the primary light-induced photochemical processes of PSII. PSII is a light-driven water:plastoquinone oxidoreductase, using light energy to abstract electrons from H(2)O, generating O(2) and a proton gradient subsequently used for ATP formation. The chain is Photosystem II CP47 reaction center protein from Lotus japonicus (Lotus corniculatus var. japonicus).